A 338-amino-acid polypeptide reads, in one-letter code: Ketol-acid reductoisomerase (NADP(+)) (338 aa).

The region spanning 1 to 181 (MKVFYDKDCD…GGGRAGIIET (181 aa)) is the KARI N-terminal Rossmann domain. NADP(+) contacts are provided by residues 24-27 (YGSQ), R47, and S52. H107 is a catalytic residue. Residue G133 participates in NADP(+) binding. In terms of domain architecture, KARI C-terminal knotted spans 182 to 327 (NFREETETDL…GKLRAMMPWI (146 aa)). Residues D190, E194, E226, and E230 each contribute to the Mg(2+) site. S251 provides a ligand contact to substrate.

The protein belongs to the ketol-acid reductoisomerase family. Mg(2+) serves as cofactor.

It carries out the reaction (2R)-2,3-dihydroxy-3-methylbutanoate + NADP(+) = (2S)-2-acetolactate + NADPH + H(+). It catalyses the reaction (2R,3R)-2,3-dihydroxy-3-methylpentanoate + NADP(+) = (S)-2-ethyl-2-hydroxy-3-oxobutanoate + NADPH + H(+). It participates in amino-acid biosynthesis; L-isoleucine biosynthesis; L-isoleucine from 2-oxobutanoate: step 2/4. Its pathway is amino-acid biosynthesis; L-valine biosynthesis; L-valine from pyruvate: step 2/4. In terms of biological role, involved in the biosynthesis of branched-chain amino acids (BCAA). Catalyzes an alkyl-migration followed by a ketol-acid reduction of (S)-2-acetolactate (S2AL) to yield (R)-2,3-dihydroxy-isovalerate. In the isomerase reaction, S2AL is rearranged via a Mg-dependent methyl migration to produce 3-hydroxy-3-methyl-2-ketobutyrate (HMKB). In the reductase reaction, this 2-ketoacid undergoes a metal-dependent reduction by NADPH to yield (R)-2,3-dihydroxy-isovalerate. The polypeptide is Ketol-acid reductoisomerase (NADP(+)) (Bordetella bronchiseptica (strain ATCC BAA-588 / NCTC 13252 / RB50) (Alcaligenes bronchisepticus)).